Here is a 441-residue protein sequence, read N- to C-terminus: Methylenetetrahydrofolate--tRNA-(uracil-5-)-methyltransferase TrmFO (441 aa).

11-16 provides a ligand contact to FAD; it reads GGGLAG.

The protein belongs to the MnmG family. TrmFO subfamily. FAD serves as cofactor.

It localises to the cytoplasm. It catalyses the reaction uridine(54) in tRNA + (6R)-5,10-methylene-5,6,7,8-tetrahydrofolate + NADH + H(+) = 5-methyluridine(54) in tRNA + (6S)-5,6,7,8-tetrahydrofolate + NAD(+). It carries out the reaction uridine(54) in tRNA + (6R)-5,10-methylene-5,6,7,8-tetrahydrofolate + NADPH + H(+) = 5-methyluridine(54) in tRNA + (6S)-5,6,7,8-tetrahydrofolate + NADP(+). Functionally, catalyzes the folate-dependent formation of 5-methyl-uridine at position 54 (M-5-U54) in all tRNAs. The chain is Methylenetetrahydrofolate--tRNA-(uracil-5-)-methyltransferase TrmFO from Syntrophus aciditrophicus (strain SB).